A 20-amino-acid polypeptide reads, in one-letter code: Fibrinogen beta chain (20 aa).

Residues alanine 1–arginine 20 form a disordered region. An O-linked (GalNAc...) threonine glycan is attached at threonine 2. Residue tyrosine 4 is modified to Sulfotyrosine.

Heterohexamer; disulfide linked. Contains 2 sets of 3 non-identical chains (alpha, beta and gamma). The 2 heterotrimers are in head to head conformation with the N-termini in a small central domain. Post-translationally, conversion of fibrinogen to fibrin is triggered by thrombin, which cleaves fibrinopeptides A and B from alpha and beta chains, and thus exposes the N-terminal polymerization sites responsible for the formation of the soft clot.

The protein resides in the secreted. Functionally, cleaved by the protease thrombin to yield monomers which, together with fibrinogen alpha (FGA) and fibrinogen gamma (FGG), polymerize to form an insoluble fibrin matrix. Fibrin has a major function in hemostasis as one of the primary components of blood clots. In addition, functions during the early stages of wound repair to stabilize the lesion and guide cell migration during re-epithelialization. Was originally thought to be essential for platelet aggregation, based on in vitro studies using anticoagulated blood. However subsequent studies have shown that it is not absolutely required for thrombus formation in vivo. Enhances expression of SELP in activated platelets. Maternal fibrinogen is essential for successful pregnancy. Fibrin deposition is also associated with infection, where it protects against IFNG-mediated hemorrhage. May also facilitate the antibacterial immune response via both innate and T-cell mediated pathways. This chain is Fibrinogen beta chain (FGB), found in Elephas maximus (Indian elephant).